Consider the following 210-residue polypeptide: 23.5 kDa heat shock protein, mitochondrial (210 aa).

The N-terminal 20 residues, 1–20 (MASSSALALRRLLSSSTVAV), are a transit peptide targeting the mitochondrion. Residues 102–210 (MGASGVRRGW…RNNIRHINVD (109 aa)) form the sHSP domain.

Belongs to the small heat shock protein (HSP20) family. May form oligomeric structures.

Its subcellular location is the mitochondrion. In Arabidopsis thaliana (Mouse-ear cress), this protein is 23.5 kDa heat shock protein, mitochondrial (HSP23.5).